The primary structure comprises 308 residues: Testis-specific Y-encoded protein 1 (308 aa).

The protein belongs to the nucleosome assembly protein (NAP) family. Post-translationally, phosphorylated. Specifically expressed in testicular tissues. Isoform 1 and isoform 2 are expressed in spermatogonia and spermatocytes. Found in early testicular carcinoma in situ, spermatogonial cells in testicular tissues of 46,X,Y female and in prostate cancer cell lines.

The protein resides in the cytoplasm. The protein localises to the nucleus. May be involved in sperm differentiation and proliferation. This Homo sapiens (Human) protein is Testis-specific Y-encoded protein 1 (TSPY1).